We begin with the raw amino-acid sequence, 46 residues long: Diuretic hormone (46 aa).

At Ile46 the chain carries Isoleucine amide.

This sequence belongs to the sauvagine/corticotropin-releasing factor/urotensin I family.

The protein resides in the secreted. Functionally, regulation of fluid secretion. Stimulates primary urine secretion by Malpighian tubules and causes a dose-dependent stimulation of cAMP levels in the tubules. In Periplaneta americana (American cockroach), this protein is Diuretic hormone.